The following is a 147-amino-acid chain: Large ribosomal subunit protein mL40 (147 aa).

Residues 1-26 constitute a mitochondrion transit peptide; it reads MLAQTFKKPHRAVLEQVSGTTVFIRN.

It belongs to the mitochondrion-specific ribosomal protein mL40 family. As to quaternary structure, component of the mitochondrial large ribosomal subunit (mt-LSU). Mature yeast 74S mitochondrial ribosomes consist of a small (37S) and a large (54S) subunit. The 37S small subunit contains a 15S ribosomal RNA (15S mt-rRNA) and 34 different proteins. The 54S large subunit contains a 21S rRNA (21S mt-rRNA) and 46 different proteins.

Its subcellular location is the mitochondrion. In terms of biological role, component of the mitochondrial ribosome (mitoribosome), a dedicated translation machinery responsible for the synthesis of mitochondrial genome-encoded proteins, including at least some of the essential transmembrane subunits of the mitochondrial respiratory chain. The mitoribosomes are attached to the mitochondrial inner membrane and translation products are cotranslationally integrated into the membrane. The polypeptide is Large ribosomal subunit protein mL40 (MRPL28) (Saccharomyces cerevisiae (strain ATCC 204508 / S288c) (Baker's yeast)).